A 572-amino-acid chain; its full sequence is MNLHQTVEHEAAAAFAAAGIADSPVVLQPTKNAEHGDFQINGVMGAAKKAKQNPRELAQKVADALAGNAVIESAEVAGPGFINLRLRPEFLAQNIQTALNDARFGVAKTDKPQTVVIDYSSPNLAKEMHVGHLRSSIIGDSISRVLEFMGNTVIRQNHVGDWGTQFGMLVAYLVEQQKDNAAFELADLEQFYRAAKVRFDEDPAFADTAREYVVKLQGGDETVLALWKQFVDISLSHAQAVYDTLGLKLRPEDVAGESKYNDDLQAVVDDLVQKGLAVEDDGAKVVFLDEFKNKEGEPAAFIVQKQGGGFLYASTDLACLRYRVGTLHADRLLYVVDHRQALHFEQLFTTSRKAGYLPENVGAAFVGFGTMMGKDGKPFKTRSGDTVKLVDLLTEAVERATALVKEKNPELGADEAAKIGKTVGIGAVKYADLSKNRTSDYVFDWDAMLSFEGNTAPYLQYAYTRVQSVFRKAGEWDADAPTVLTEPLEKQLAAELLKFENVLQSVADTAYPHYLAAYLYQIATLFSRFYEACPILKAEGASRNSRLQLAKLTGDTLKQGLDLLGIDVLDVM.

Positions 122-132 (PNLAKEMHVGH) match the 'HIGH' region motif.

The protein belongs to the class-I aminoacyl-tRNA synthetase family. As to quaternary structure, monomer.

It localises to the cytoplasm. It carries out the reaction tRNA(Arg) + L-arginine + ATP = L-arginyl-tRNA(Arg) + AMP + diphosphate. The polypeptide is Arginine--tRNA ligase (Neisseria meningitidis serogroup C / serotype 2a (strain ATCC 700532 / DSM 15464 / FAM18)).